The following is a 231-amino-acid chain: Endonuclease NucS (231 aa).

The protein belongs to the NucS endonuclease family.

The protein localises to the cytoplasm. Functionally, cleaves both 3' and 5' ssDNA extremities of branched DNA structures. In Kocuria rhizophila (strain ATCC 9341 / DSM 348 / NBRC 103217 / DC2201), this protein is Endonuclease NucS.